The chain runs to 275 residues: Large ribosomal subunit protein uL2 (275 aa).

Polar residues predominate over residues serine 38–histidine 53. Disordered stretches follow at residues serine 38 to lysine 59 and alanine 224 to arginine 257.

This sequence belongs to the universal ribosomal protein uL2 family. As to quaternary structure, part of the 50S ribosomal subunit. Forms a bridge to the 30S subunit in the 70S ribosome.

Functionally, one of the primary rRNA binding proteins. Required for association of the 30S and 50S subunits to form the 70S ribosome, for tRNA binding and peptide bond formation. It has been suggested to have peptidyltransferase activity; this is somewhat controversial. Makes several contacts with the 16S rRNA in the 70S ribosome. This is Large ribosomal subunit protein uL2 from Burkholderia multivorans (strain ATCC 17616 / 249).